The chain runs to 295 residues: MSALRQIAFYGKGGIGKSTTSQNTLAALVEMGQRILIVGCDPKADSTRLILNTKLQDTVLHLAAEAGSVEDLDVADVVKIGYKGIKCTESGGPEPGVGCAGRGVITAINFLEENGAYDDLDYVSYDVLGDVVCGGFAMPIRENKAQEIYIVMSGEMMALYAANNIAKGILKYAHTGGVRLGGLICNERQTDKEVELAEALAGRLGCRLIHFVPRDNGVQHAELRRQTVIQYAPDSKQAGEYRTLATKIHNNSGQGVVPTPITMEDLEEMLMEFGIMKSDEEALAELEAKESAAAN.

11–18 (GKGGIGKS) provides a ligand contact to ATP. [4Fe-4S] cluster is bound at residue C99. R102 is modified (ADP-ribosylarginine; by dinitrogenase reductase ADP-ribosyltransferase). C133 contributes to the [4Fe-4S] cluster binding site.

Belongs to the NifH/BchL/ChlL family. In terms of assembly, homodimer. It depends on [4Fe-4S] cluster as a cofactor. The reversible ADP-ribosylation of Arg-102 inactivates the nitrogenase reductase and regulates nitrogenase activity.

The catalysed reaction is N2 + 8 reduced [2Fe-2S]-[ferredoxin] + 16 ATP + 16 H2O = H2 + 8 oxidized [2Fe-2S]-[ferredoxin] + 2 NH4(+) + 16 ADP + 16 phosphate + 6 H(+). Its function is as follows. The key enzymatic reactions in nitrogen fixation are catalyzed by the nitrogenase complex, which has 2 components: the iron protein and the molybdenum-iron protein. This chain is Nitrogenase iron protein (nifH), found in Rhodospirillum rubrum.